The following is a 928-amino-acid chain: Dual serine/threonine and tyrosine protein kinase (928 aa).

A compositionally biased stretch (low complexity) spans 1-14 (MEGDGVPWGSEPES). Disordered stretches follow at residues 1 to 22 (MEGD…GGGG) and 55 to 81 (LRGS…AGDV). Residues 394–430 (RKKENELYESLMNIANRKQEEMKDMIVETLNTMKEEL) adopt a coiled-coil conformation. One can recognise a Protein kinase domain in the interval 651 to 905 (PKLGQELGRG…PLLGIVQPML (255 aa)). ATP-binding positions include 657-665 (LGRGQYGVV) and Lys-680. The active-site Proton acceptor is Asp-776.

This sequence belongs to the protein kinase superfamily. Ser/Thr protein kinase family.

The protein resides in the cytoplasm. The protein localises to the cell membrane. Its subcellular location is the apical cell membrane. It localises to the basolateral cell membrane. It is found in the cell junction. The catalysed reaction is L-seryl-[protein] + ATP = O-phospho-L-seryl-[protein] + ADP + H(+). It catalyses the reaction L-threonyl-[protein] + ATP = O-phospho-L-threonyl-[protein] + ADP + H(+). The enzyme catalyses L-tyrosyl-[protein] + ATP = O-phospho-L-tyrosyl-[protein] + ADP + H(+). Functionally, acts as a positive regulator of ERK phosphorylation downstream of fibroblast growth factor-receptor activation. Involved in the regulation of both caspase-dependent apoptosis and caspase-independent cell death. In the skin, it plays a predominant role in suppressing caspase-dependent apoptosis in response to UV stress in a range of dermal cell types. This is Dual serine/threonine and tyrosine protein kinase (DSTYK) from Bos taurus (Bovine).